The following is a 72-amino-acid chain: Small ribosomal subunit protein bS18 (72 aa).

It belongs to the bacterial ribosomal protein bS18 family. Part of the 30S ribosomal subunit. Forms a tight heterodimer with protein bS6.

In terms of biological role, binds as a heterodimer with protein bS6 to the central domain of the 16S rRNA, where it helps stabilize the platform of the 30S subunit. This Francisella tularensis subsp. holarctica (strain OSU18) protein is Small ribosomal subunit protein bS18.